Here is a 184-residue protein sequence, read N- to C-terminus: Peptidyl-tRNA hydrolase (184 aa).

A tRNA-binding site is contributed by tyrosine 14. Catalysis depends on histidine 19, which acts as the Proton acceptor. Phenylalanine 60 and asparagine 62 together coordinate tRNA.

The protein belongs to the PTH family. As to quaternary structure, monomer.

It localises to the cytoplasm. The enzyme catalyses an N-acyl-L-alpha-aminoacyl-tRNA + H2O = an N-acyl-L-amino acid + a tRNA + H(+). In terms of biological role, hydrolyzes ribosome-free peptidyl-tRNAs (with 1 or more amino acids incorporated), which drop off the ribosome during protein synthesis, or as a result of ribosome stalling. Functionally, catalyzes the release of premature peptidyl moieties from peptidyl-tRNA molecules trapped in stalled 50S ribosomal subunits, and thus maintains levels of free tRNAs and 50S ribosomes. The chain is Peptidyl-tRNA hydrolase from Mesomycoplasma hyopneumoniae (strain 232) (Mycoplasma hyopneumoniae).